The primary structure comprises 327 residues: Gamma-resorcylate decarboxylase (327 aa).

Residues Glu8 and His10 each contribute to the Zn(2+) site. Residues Phe23, His164, and Asp287 each coordinate 2,6-dihydroxybenzoate. The Zn(2+) site is built by His164 and Asp287. Asp287 is a catalytic residue.

It belongs to the metallo-dependent hydrolases superfamily. ACMSD family. In terms of assembly, homotetramer. Dimer of dimers. Zn(2+) serves as cofactor.

The enzyme catalyses 2,6-dihydroxybenzoate + H(+) = resorcinol + CO2. The catalysed reaction is 2,3-dihydroxybenzoate + H(+) = catechol + CO2. It participates in aromatic compound metabolism. Inhibited by CuCl(2), monoiodoacetate and diethylpyrocarbonate. Inhibited by 2,3-dihydroxybenzaldehyde, which is an analog of the substrate 2,3-dihydroxybenzoate. Involved in the gamma-resorcylate (2,6-dihydroxybenzoate) catabolism. Catalyzes the reversible decarboxylation of gamma-resorcylate to resorcinol. The reaction is reversible, but equilibrium greatly favors the decarboxylation reaction. Also catalyzes the decarboxylation of 2,3-dihydroxybenzoate to catechol, but does not act on 2,4-dihydroxybenzoate, 2,5-dihydroxybenzoate, 3,4-dihydroxybenzoate, 3,5-dihydroxybenzoate, 2-hydroxybenzoate, or 3-hydroxybenzoate. Only resorcinol is carboxylated by the reverse reaction. In Rhizobium sp. (strain MTP-10005), this protein is Gamma-resorcylate decarboxylase.